A 523-amino-acid polypeptide reads, in one-letter code: 2-isopropylmalate synthase (523 aa).

The region spanning 5–267 (VIIFDTTLRD…HTAINHQEIW (263 aa)) is the Pyruvate carboxyltransferase domain. Asp14, His202, His204, and Asn238 together coordinate Mn(2+). Residues 392-523 (RLDYFSVQSG…QHNENNKETV (132 aa)) are regulatory domain.

It belongs to the alpha-IPM synthase/homocitrate synthase family. LeuA type 1 subfamily. As to quaternary structure, homodimer. The cofactor is Mn(2+).

Its subcellular location is the cytoplasm. The catalysed reaction is 3-methyl-2-oxobutanoate + acetyl-CoA + H2O = (2S)-2-isopropylmalate + CoA + H(+). It participates in amino-acid biosynthesis; L-leucine biosynthesis; L-leucine from 3-methyl-2-oxobutanoate: step 1/4. In terms of biological role, catalyzes the condensation of the acetyl group of acetyl-CoA with 3-methyl-2-oxobutanoate (2-ketoisovalerate) to form 3-carboxy-3-hydroxy-4-methylpentanoate (2-isopropylmalate). This is 2-isopropylmalate synthase from Escherichia coli (strain SMS-3-5 / SECEC).